A 544-amino-acid chain; its full sequence is Phenylalanine--tRNA ligase beta subunit (544 aa).

A B5 domain is found at 270-346 (LEPKTRFLTK…KGYGYENIKV (77 aa)). 4 residues coordinate Mg(2+): Asp-324, Asp-330, Glu-333, and Asp-334.

The protein belongs to the phenylalanyl-tRNA synthetase beta subunit family. Type 2 subfamily. In terms of assembly, tetramer of two alpha and two beta subunits. Mg(2+) is required as a cofactor.

Its subcellular location is the cytoplasm. It carries out the reaction tRNA(Phe) + L-phenylalanine + ATP = L-phenylalanyl-tRNA(Phe) + AMP + diphosphate + H(+). In Methanosarcina barkeri (strain Fusaro / DSM 804), this protein is Phenylalanine--tRNA ligase beta subunit.